Consider the following 403-residue polypeptide: Non-structural maintenance of chromosomes element 4 homolog A (403 aa).

The span at 1–45 (MRKTVKRESEATGGKREADDEPEKLRSVKKEKQRKTEADSVRPDE) shows a compositional bias: basic and acidic residues. Disordered regions lie at residues 1–57 (MRKT…QGIS), 194–226 (LKQRKRAPNRKRTKPGEGVRPDEVDDSQSEEKT), and 342–403 (SSCP…LTSS). Residues 196-206 (QRKRAPNRKRT) are compositionally biased toward basic residues. Low complexity predominate over residues 342–353 (SSCPAASAPASA). Over residues 354–363 (DFTQDTQTTP) the composition is skewed to polar residues. The segment covering 384–393 (TPDKEGDGTR) has biased composition (basic and acidic residues). A compositionally biased stretch (basic residues) spans 394 to 403 (RRCKRRLTSS).

It belongs to the NSE4 family. Interacts with SMC5, SMC6A or SMC6B. The SMC5-SMC6 complex is composed of the SMC5 and SMC6 heterodimer attached via their hinge domain and from the non-SMC subunit NSE4A or NSE4B. As to expression, expressed in seedlings, rosette leaves and floral buds.

The protein localises to the nucleus. Component of the SMC5-SMC6 complex, that promotes sister chromatid alignment after DNA damage and facilitates double-stranded DNA breaks (DSBs) repair via homologous recombination between sister chromatids. The protein is Non-structural maintenance of chromosomes element 4 homolog A (NSE4A) of Arabidopsis thaliana (Mouse-ear cress).